A 704-amino-acid polypeptide reads, in one-letter code: Elongation factor G (704 aa).

In terms of domain architecture, tr-type G spans Val8–Ser291. GTP contacts are provided by residues Ala17–Thr24, Asp88–His92, and Asn142–Asp145.

This sequence belongs to the TRAFAC class translation factor GTPase superfamily. Classic translation factor GTPase family. EF-G/EF-2 subfamily.

The protein resides in the cytoplasm. Functionally, catalyzes the GTP-dependent ribosomal translocation step during translation elongation. During this step, the ribosome changes from the pre-translocational (PRE) to the post-translocational (POST) state as the newly formed A-site-bound peptidyl-tRNA and P-site-bound deacylated tRNA move to the P and E sites, respectively. Catalyzes the coordinated movement of the two tRNA molecules, the mRNA and conformational changes in the ribosome. This chain is Elongation factor G, found in Blochmanniella pennsylvanica (strain BPEN).